The following is a 429-amino-acid chain: Bifunctional protein GlmU (429 aa).

A pyrophosphorylase region spans residues 1-223 (MKTSILILAA…EDEFMGINDK (223 aa)). UDP-N-acetyl-alpha-D-glucosamine-binding positions include 8–11 (LAAG), K22, and 81–82 (GT). Residue D102 coordinates Mg(2+). Residues G135, E149, N164, and N221 each coordinate UDP-N-acetyl-alpha-D-glucosamine. N221 serves as a coordination point for Mg(2+). Residues 224 to 244 (FELSIAENFMQEKIKKYWMQQ) form a linker region. The N-acetyltransferase stretch occupies residues 245-429 (GVIFHLPQST…KDYYYKKFQK (185 aa)). Residues R308 and K325 each coordinate UDP-N-acetyl-alpha-D-glucosamine. Residue H336 is the Proton acceptor of the active site. UDP-N-acetyl-alpha-D-glucosamine contacts are provided by Y339 and N350. Residues 359 to 360 (NY), S378, A396, and R413 contribute to the acetyl-CoA site.

It in the N-terminal section; belongs to the N-acetylglucosamine-1-phosphate uridyltransferase family. The protein in the C-terminal section; belongs to the transferase hexapeptide repeat family. In terms of assembly, homotrimer. It depends on Mg(2+) as a cofactor.

It is found in the cytoplasm. The catalysed reaction is alpha-D-glucosamine 1-phosphate + acetyl-CoA = N-acetyl-alpha-D-glucosamine 1-phosphate + CoA + H(+). The enzyme catalyses N-acetyl-alpha-D-glucosamine 1-phosphate + UTP + H(+) = UDP-N-acetyl-alpha-D-glucosamine + diphosphate. Its pathway is nucleotide-sugar biosynthesis; UDP-N-acetyl-alpha-D-glucosamine biosynthesis; N-acetyl-alpha-D-glucosamine 1-phosphate from alpha-D-glucosamine 6-phosphate (route II): step 2/2. The protein operates within nucleotide-sugar biosynthesis; UDP-N-acetyl-alpha-D-glucosamine biosynthesis; UDP-N-acetyl-alpha-D-glucosamine from N-acetyl-alpha-D-glucosamine 1-phosphate: step 1/1. It functions in the pathway bacterial outer membrane biogenesis; LPS lipid A biosynthesis. Functionally, catalyzes the last two sequential reactions in the de novo biosynthetic pathway for UDP-N-acetylglucosamine (UDP-GlcNAc). The C-terminal domain catalyzes the transfer of acetyl group from acetyl coenzyme A to glucosamine-1-phosphate (GlcN-1-P) to produce N-acetylglucosamine-1-phosphate (GlcNAc-1-P), which is converted into UDP-GlcNAc by the transfer of uridine 5-monophosphate (from uridine 5-triphosphate), a reaction catalyzed by the N-terminal domain. This is Bifunctional protein GlmU from Campylobacter jejuni (strain RM1221).